The chain runs to 244 residues: DNA repair protein RecO (244 aa).

This sequence belongs to the RecO family.

In terms of biological role, involved in DNA repair and RecF pathway recombination. The sequence is that of DNA repair protein RecO from Caldicellulosiruptor saccharolyticus (strain ATCC 43494 / DSM 8903 / Tp8T 6331).